Here is a 623-residue protein sequence, read N- to C-terminus: Interleukin-27 receptor subunit alpha (623 aa).

The signal sequence occupies residues 1–24 (MNRLRVARLTPLELLLSLMSLLLG). The Extracellular segment spans residues 25-510 (TRPHGSPGPL…HLPDNRIRWK (486 aa)). 2 consecutive Fibronectin type-III domains span residues 30 to 124 (SPGP…MKPD) and 125 to 225 (TPQI…TPFL). A glycan (N-linked (GlcNAc...) asparagine) is linked at asparagine 46. A WSXWS motif motif is present at residues 211 to 215 (WGEWS). N-linked (GlcNAc...) asparagine glycosylation is found at asparagine 296, asparagine 305, asparagine 360, asparagine 368, and asparagine 461. 2 consecutive Fibronectin type-III domains span residues 316 to 412 (APCD…VPLA) and 413 to 505 (GPAV…LPDN). The helical transmembrane segment at 511–531 (ALPWFLSLWGLLLMGCGLSLA) threads the bilayer. At 532 to 623 (STRCLQARCL…PTPEELGLLV (92 aa)) the chain is on the cytoplasmic side. The Box 1 motif signature appears at 552–560 (IWERVPDPA).

Belongs to the type I cytokine receptor family. Type 2 subfamily. In terms of tissue distribution, expressed in CD4+ and CD8+ T-cells, B-cells, natural killer cells and macrophages. Highest levels in CD4+ T-cells and natural killer cells. Expression highest in Th0 cells.

The protein localises to the membrane. Its function is as follows. Receptor for IL27. Requires IL6ST/GP130 to mediate signal transduction in response to IL27. This signaling system acts through STAT3 and STAT1. Involved in the regulation of Th1-type immune responses. Also appears to be involved in innate defense mechanisms. This Mus musculus (Mouse) protein is Interleukin-27 receptor subunit alpha (Il27ra).